Here is a 258-residue protein sequence, read N- to C-terminus: UPF0246 protein VV0659 (258 aa).

Belongs to the UPF0246 family.

This is UPF0246 protein VV0659 from Vibrio vulnificus (strain YJ016).